The following is a 518-amino-acid chain: MIASSKMLLSASILIYFLLNLQSSSAEIADCSFYDTVDISEGQRLSNGSYLYEGLLIPAHLTAKYEFKLLANGDKEQVPSHVRGCVCKLRTCVRFCCPHDHIMDMGECYANMTTEENELLDPMLNVTLDDGSVVQRHYKKELMVQWDLPKPCDDMFYLDNRDIMDEYTLFENGRLLRHYDQVYLDKSEYCLQHRTFGEGNNNSIRIIPHNCLILPSRTGQTVVMITSLICLVLTIAVYLCVKKLMNLEGKCFICYMMCLFFGYLFLLLDLWELSLDFCKAAGFLGYFFVMAAFFWLSIISRHYWKCLTNPCASMNIRSERAFLLYSCFAWAMPLALTGVTYLADNVVNNEEWQPRVGDEGHCWIYTKSWSAMVYFYGPMVLLILFNITMFVLTAKHIIDSKRTLRKIARNEGRIQKLNSDKQNYTQFLLLFTVMGMSWSFEIFSYLVQREKLWVNIFLVADYFNWSQGVIIFVLFILRRKTLVLFKKQIFPKQRAFSRSATQSTIESISQTKRHFNMT.

The N-terminal stretch at 1-26 is a signal peptide; that stretch reads MIASSKMLLSASILIYFLLNLQSSSA. Over 27 to 220 the chain is Extracellular; it reads EIADCSFYDT…CLILPSRTGQ (194 aa). 5 disulfides stabilise this stretch: cysteine 31-cysteine 85, cysteine 87-cysteine 92, cysteine 96-cysteine 190, cysteine 97-cysteine 108, and cysteine 152-cysteine 211. An N-linked (GlcNAc...) asparagine glycan is attached at asparagine 47. 3 N-linked (GlcNAc...) asparagine glycosylation sites follow: asparagine 111, asparagine 125, and asparagine 201. The chain crosses the membrane as a helical span at residues 221 to 241; that stretch reads TVVMITSLICLVLTIAVYLCV. Topologically, residues 242 to 250 are cytoplasmic; that stretch reads KKLMNLEGK. A helical membrane pass occupies residues 251 to 271; it reads CFICYMMCLFFGYLFLLLDLW. Topologically, residues 272 to 279 are extracellular; sequence ELSLDFCK. Residues 280 to 300 traverse the membrane as a helical segment; it reads AAGFLGYFFVMAAFFWLSIIS. Over 301–321 the chain is Cytoplasmic; it reads RHYWKCLTNPCASMNIRSERA. The chain crosses the membrane as a helical span at residues 322–342; it reads FLLYSCFAWAMPLALTGVTYL. Residues 343 to 371 are Extracellular-facing; it reads ADNVVNNEEWQPRVGDEGHCWIYTKSWSA. Residues 372–392 traverse the membrane as a helical segment; it reads MVYFYGPMVLLILFNITMFVL. Residues 393 to 426 lie on the Cytoplasmic side of the membrane; the sequence is TAKHIIDSKRTLRKIARNEGRIQKLNSDKQNYTQ. The chain crosses the membrane as a helical span at residues 427–447; sequence FLLLFTVMGMSWSFEIFSYLV. At 448–455 the chain is on the extracellular side; that stretch reads QREKLWVN. A helical membrane pass occupies residues 456-476; the sequence is IFLVADYFNWSQGVIIFVLFI. The Cytoplasmic segment spans residues 477-518; the sequence is LRRKTLVLFKKQIFPKQRAFSRSATQSTIESISQTKRHFNMT.

It belongs to the G-protein coupled receptor 2 family. Mth subfamily.

It is found in the cell membrane. The sequence is that of Probable G-protein coupled receptor Mth-like 2 (mthl2) from Drosophila melanogaster (Fruit fly).